A 164-amino-acid chain; its full sequence is UPF0114 protein YqhA (164 aa).

3 consecutive transmembrane segments (helical) span residues 10–32 (YASR…ALAL), 53–75 (LILV…MVMF), and 136–155 (LMWY…VMGY).

Belongs to the UPF0114 family.

Its subcellular location is the cell membrane. This chain is UPF0114 protein YqhA, found in Salmonella typhi.